We begin with the raw amino-acid sequence, 464 residues long: Bifunctional protein GlmU (464 aa).

Residues 1–232 (MKHDELAAVI…ADEAMGINDR (232 aa)) are pyrophosphorylase. UDP-N-acetyl-alpha-D-glucosamine contacts are provided by residues 11 to 14 (LAAG), K25, Q76, and 81 to 82 (GT). D106 lines the Mg(2+) pocket. Residues G143, E157, N172, and N230 each coordinate UDP-N-acetyl-alpha-D-glucosamine. N230 lines the Mg(2+) pocket. The interval 233–253 (VQLAQASALMRRRINENLMRA) is linker. Positions 254-464 (GVSFIDPEQT…RHDPKCKNKD (211 aa)) are N-acetyltransferase. UDP-N-acetyl-alpha-D-glucosamine is bound by residues R336 and K354. H366 acts as the Proton acceptor in catalysis. The UDP-N-acetyl-alpha-D-glucosamine site is built by Y369 and N380. Residues 389-390 (NY), S408, A426, and R443 contribute to the acetyl-CoA site.

This sequence in the N-terminal section; belongs to the N-acetylglucosamine-1-phosphate uridyltransferase family. In the C-terminal section; belongs to the transferase hexapeptide repeat family. In terms of assembly, homotrimer. The cofactor is Mg(2+).

The protein resides in the cytoplasm. The catalysed reaction is alpha-D-glucosamine 1-phosphate + acetyl-CoA = N-acetyl-alpha-D-glucosamine 1-phosphate + CoA + H(+). It catalyses the reaction N-acetyl-alpha-D-glucosamine 1-phosphate + UTP + H(+) = UDP-N-acetyl-alpha-D-glucosamine + diphosphate. It functions in the pathway nucleotide-sugar biosynthesis; UDP-N-acetyl-alpha-D-glucosamine biosynthesis; N-acetyl-alpha-D-glucosamine 1-phosphate from alpha-D-glucosamine 6-phosphate (route II): step 2/2. It participates in nucleotide-sugar biosynthesis; UDP-N-acetyl-alpha-D-glucosamine biosynthesis; UDP-N-acetyl-alpha-D-glucosamine from N-acetyl-alpha-D-glucosamine 1-phosphate: step 1/1. The protein operates within bacterial outer membrane biogenesis; LPS lipid A biosynthesis. Catalyzes the last two sequential reactions in the de novo biosynthetic pathway for UDP-N-acetylglucosamine (UDP-GlcNAc). The C-terminal domain catalyzes the transfer of acetyl group from acetyl coenzyme A to glucosamine-1-phosphate (GlcN-1-P) to produce N-acetylglucosamine-1-phosphate (GlcNAc-1-P), which is converted into UDP-GlcNAc by the transfer of uridine 5-monophosphate (from uridine 5-triphosphate), a reaction catalyzed by the N-terminal domain. This Syntrophotalea carbinolica (strain DSM 2380 / NBRC 103641 / GraBd1) (Pelobacter carbinolicus) protein is Bifunctional protein GlmU.